The chain runs to 651 residues: J domain-containing protein required for chloroplast accumulation response 1 (651 aa).

A compositionally biased stretch (polar residues) spans 1 to 17 (MQTLPSSETVLLGSNSA). Disordered stretches follow at residues 1–56 (MQTL…TRHS), 114–138 (GSRI…QFSL), 156–176 (LNKN…SKAD), 250–291 (KLGK…TDLK), and 308–526 (KPLD…IDEP). Serine 56 is subject to Phosphoserine. Over residues 126 to 137 (SSSGTSSPSQFS) the composition is skewed to low complexity. Composition is skewed to basic and acidic residues over residues 250 to 259 (KLGKNEEGDG), 281 to 291 (TKEEKTETDLK), 337 to 357 (IFHE…EVRK), 405 to 416 (VGKDGVKGKVSD), 441 to 456 (RAKE…DGSN), and 488 to 497 (QKKDSDRESM). Positions 532 to 562 (DVEDITQDENKMEEANKDAEEIKNIDAKIRK) form a coiled coil. Positions 586–651 (SGWKPVPLMD…WDHFNTLGPV (66 aa)) constitute a J domain.

Expressed in leaves and stems, but not in roots.

The protein localises to the cytoplasm. Required for chloroplast photorelocation movement; chloroplast accumulation upon low blue light and for chloroplast movement to the bottom of cells in darkness, by modulating chloroplast actin (Cp-actin) filaments distribution, appearance and disappearance. May mediate a slight resistance to aluminum in root hair cells. The sequence is that of J domain-containing protein required for chloroplast accumulation response 1 (JAC1) from Arabidopsis thaliana (Mouse-ear cress).